A 225-amino-acid chain; its full sequence is Histone H1 (225 aa).

The interval 1–20 (MGPKATSGTRGRGKKVGTKT) is disordered. Residues 23-94 (PLPKYKDLIV…GPAGSIKLLK (72 aa)) form the H15 domain. The interval 95–147 (KAAQPKPEEAKRAAKPAKRVVKAAKPAKAKPAKAAKAAKPAKPVKAAKAASAV) is disordered. Residues 107 to 127 (AAKPAKRVVKAAKPAKAKPAK) are compositionally biased toward basic residues. Low complexity predominate over residues 128–147 (AAKAAKPAKPVKAAKAASAV).

It belongs to the histone H1/H5 family.

Its subcellular location is the nucleus. The protein resides in the chromosome. In terms of biological role, could act as an H1-type linker histone. This Eremothecium gossypii (strain ATCC 10895 / CBS 109.51 / FGSC 9923 / NRRL Y-1056) (Yeast) protein is Histone H1 (HHOA).